A 439-amino-acid polypeptide reads, in one-letter code: tRNA-2-methylthio-N(6)-dimethylallyladenosine synthase (439 aa).

In terms of domain architecture, MTTase N-terminal spans 2–115 (KGLYIKTYGC…LPELIVKASR (114 aa)). The [4Fe-4S] cluster site is built by C11, C47, C78, C155, C159, and C162. A Radical SAM core domain is found at 141–372 (NSQGSSAFLA…QKLISKQQLE (232 aa)). The TRAM domain maps to 375-439 (QSMVGKTIPV…QSSLLGCAFH (65 aa)).

The protein belongs to the methylthiotransferase family. MiaB subfamily. As to quaternary structure, monomer. Requires [4Fe-4S] cluster as cofactor.

The protein localises to the cytoplasm. It catalyses the reaction N(6)-dimethylallyladenosine(37) in tRNA + (sulfur carrier)-SH + AH2 + 2 S-adenosyl-L-methionine = 2-methylsulfanyl-N(6)-dimethylallyladenosine(37) in tRNA + (sulfur carrier)-H + 5'-deoxyadenosine + L-methionine + A + S-adenosyl-L-homocysteine + 2 H(+). In terms of biological role, catalyzes the methylthiolation of N6-(dimethylallyl)adenosine (i(6)A), leading to the formation of 2-methylthio-N6-(dimethylallyl)adenosine (ms(2)i(6)A) at position 37 in tRNAs that read codons beginning with uridine. The polypeptide is tRNA-2-methylthio-N(6)-dimethylallyladenosine synthase (Wolbachia pipientis wMel).